The chain runs to 527 residues: Phosphoenolpyruvate carboxykinase (ATP) (527 aa).

Substrate is bound by residues Arg-55, Tyr-191, and Lys-197. ATP is bound by residues Lys-197, His-216, and 232-240; that span reads GLSGTGKTT. Positions 197 and 216 each coordinate Mn(2+). A Mn(2+)-binding site is contributed by Asp-253. Residues Glu-281, Arg-318, and Thr-443 each contribute to the ATP site. Arg-318 is a substrate binding site.

It belongs to the phosphoenolpyruvate carboxykinase (ATP) family. The cofactor is Mn(2+).

Its subcellular location is the cytoplasm. The catalysed reaction is oxaloacetate + ATP = phosphoenolpyruvate + ADP + CO2. Its pathway is carbohydrate biosynthesis; gluconeogenesis. Functionally, involved in the gluconeogenesis. Catalyzes the conversion of oxaloacetate (OAA) to phosphoenolpyruvate (PEP) through direct phosphoryl transfer between the nucleoside triphosphate and OAA. The polypeptide is Phosphoenolpyruvate carboxykinase (ATP) (Brevibacillus brevis (strain 47 / JCM 6285 / NBRC 100599)).